The chain runs to 79 residues: UPF0154 protein SAK_1616 (79 aa).

A helical transmembrane segment spans residues 5–25 (IWILLIIVALFGGLVGGIFIA).

This sequence belongs to the UPF0154 family.

The protein localises to the cell membrane. The protein is UPF0154 protein SAK_1616 of Streptococcus agalactiae serotype Ia (strain ATCC 27591 / A909 / CDC SS700).